The chain runs to 582 residues: Nif-specific regulatory protein (582 aa).

Positions 1-11 are enriched in polar residues; that stretch reads MLHIPSSSERP. The disordered stretch occupies residues 1 to 28; sequence MLHIPSSSERPASQPEPERAPPGEPSHE. Basic and acidic residues predominate over residues 16 to 27; it reads EPERAPPGEPSH. Residues 46–188 form the GAF domain; it reads RLEVTLANVL…MVANVIGQTI (143 aa). A Sigma-54 factor interaction domain is found at 230–458; that stretch reads IIGDSPALSA…LENCIERTAT (229 aa). ATP-binding positions include 258 to 265 and 321 to 330; these read GESGTGKE and ADKGTLFLDE. An inter-domain linker region spans residues 459 to 539; the sequence is LSAGTSIVRS…VLVSGARMAD (81 aa). The a divalent metal cation site is built by Cys472 and Cys477. The segment at 540–582 is C-terminal DNA-binding domain; sequence RERVVAAMEKSGWVQAKAARLLGLTPRQVGYALRKYGIEIKRF. The H-T-H motif DNA-binding region spans 554–573; the sequence is QAKAARLLGLTPRQVGYALR.

In terms of assembly, interacts with sigma-54.

Required for activation of most nif operons, which are directly involved in nitrogen fixation. This is Nif-specific regulatory protein (nifA) from Bradyrhizobium diazoefficiens (strain JCM 10833 / BCRC 13528 / IAM 13628 / NBRC 14792 / USDA 110).